Consider the following 216-residue polypeptide: Pyrophosphatase PpaX (216 aa).

Asp-9 functions as the Nucleophile in the catalytic mechanism.

The protein belongs to the HAD-like hydrolase superfamily. PpaX family. It depends on Mg(2+) as a cofactor.

The enzyme catalyses diphosphate + H2O = 2 phosphate + H(+). Functionally, hydrolyzes pyrophosphate formed during P-Ser-HPr dephosphorylation by HPrK/P. Might play a role in controlling the intracellular pyrophosphate pool. The chain is Pyrophosphatase PpaX from Bacillus cereus (strain G9842).